We begin with the raw amino-acid sequence, 326 residues long: Cytosolic Fe-S cluster assembly factor NBP35 (326 aa).

The disordered stretch occupies residues 1–38 (MTEIANGQQILPPDYTLKEPEPEHCPGPESENAGKGDS). Positions 16–26 (TLKEPEPEHCP) are enriched in basic and acidic residues. [4Fe-4S] cluster contacts are provided by Cys25, Cys39, Cys42, and Cys48. 78–85 (GKGGVGKS) contacts ATP. [4Fe-4S] cluster is bound by residues Cys251 and Cys254.

The protein belongs to the Mrp/NBP35 ATP-binding proteins family. NUBP1/NBP35 subfamily. As to quaternary structure, heterotetramer of 2 NBP35 and 2 CFD1 chains. It depends on [4Fe-4S] cluster as a cofactor.

The protein localises to the cytoplasm. It is found in the nucleus. Its function is as follows. Component of the cytosolic iron-sulfur (Fe/S) protein assembly (CIA) machinery. Required for maturation of extramitochondrial Fe-S proteins. The NBP35-CFD1 heterotetramer forms a Fe-S scaffold complex, mediating the de novo assembly of an Fe-S cluster and its transfer to target apoproteins. Required for biogenesis and export of both ribosomal subunits, which may reflect a role in assembly of the Fe/S clusters in RLI1, a protein which performs rRNA processing and ribosome export. This Kluyveromyces lactis (strain ATCC 8585 / CBS 2359 / DSM 70799 / NBRC 1267 / NRRL Y-1140 / WM37) (Yeast) protein is Cytosolic Fe-S cluster assembly factor NBP35.